The following is a 387-amino-acid chain: D(4) dopamine receptor (387 aa).

Residues 1–34 (MGNSSATEDGGLLAGRGPESLGTGAGLGGAGAAA) are Extracellular-facing. Residue N3 is glycosylated (N-linked (GlcNAc...) asparagine). Residues 35 to 57 (LVGGVLLIGLVLAGNSLVCVSVA) form a helical membrane-spanning segment. Topologically, residues 58-67 (SERTLQTPTN) are cytoplasmic. Residues 68-90 (YFIVSLAAADLLLAVLVLPLFVY) traverse the membrane as a helical segment. Position 77 (D77) interacts with Na(+). The Extracellular segment spans residues 91 to 106 (SEVQGGVWLLSPRLCD). A disulfide bond links C105 and C180. Residues 107-128 (TLMAMDVMLCTASIFNLCAISV) traverse the membrane as a helical segment. Position 119 (S119) interacts with Na(+). The Cytoplasmic segment spans residues 129-146 (DRFVAVTVPLRYNQQGQC). Residues 147–170 (QLLLIAATWLLSAAVASPVVCGLN) traverse the membrane as a helical segment. Residues 171–186 (DVPGRDPAVCCLENRD) are Extracellular-facing. A helical transmembrane segment spans residues 187 to 208 (YVVYSSVCSFFLPCPLMLLLYW). The Cytoplasmic portion of the chain corresponds to 209–314 (ATFRGLRRWE…ITGRERKAMR (106 aa)). 2 disordered regions span residues 224–247 (KLHSRAPRRPSGPGPPVSDPTQGP) and 287–306 (AALPQPPEPSSRRRRGAKIT). The chain crosses the membrane as a helical span at residues 315-337 (VLPVVVGAFLVCWTPFFVVHITR). Residues 338–346 (ALCPACFVS) are Extracellular-facing. A disulfide bridge links C340 with C343. A helical membrane pass occupies residues 347–369 (PRLVSAVTWLGYVNSALNPIIYT). Residues 370 to 387 (IFNAEFRSVFRKTLRLRC) are Cytoplasmic-facing. The S-palmitoyl cysteine moiety is linked to residue C387.

This sequence belongs to the G-protein coupled receptor 1 family. In terms of assembly, forms homo- and heterooligomers with DRD2. D4.7 allele exhibits higher affinity for homodimers compared to DRD2 heterodimers, while alleles D42. and 4.4 have similar affinities for both. The interaction with DRD2 may modulate agonist-induced downstream signaling. Interacts with CLIC6. Interacts with GPRASP1. May interact with ADORA2A. Interacts with KLHL12. Palmitoylated. Palmitoylation of the C-terminal Cys is important for normal expression at the cell membrane. In terms of tissue distribution, detected in olfactory bulb, hypothalamus, olfactory tubercle, brainstem and striatum.

The protein localises to the cell membrane. Functionally, dopamine receptor responsible for neuronal signaling in the mesolimbic system of the brain, an area of the brain that regulates emotion and complex behavior. Activated by dopamine, but also by epinephrine and norepinephrine, and by numerous synthetic agonists and drugs. Agonist binding triggers signaling via G proteins that inhibit adenylyl cyclase. Modulates the circadian rhythm of contrast sensitivity by regulating the rhythmic expression of NPAS2 in the retinal ganglion cells. This chain is D(4) dopamine receptor (Drd4), found in Mus musculus (Mouse).